A 205-amino-acid chain; its full sequence is ESCRT-related protein CHMP1 (205 aa).

Coiled coils occupy residues 13–51 (DLKF…MDGA) and 109–140 (GNLQ…GAMA).

It belongs to the SNF7 family.

It is found in the cytoplasm. The protein localises to the endosome membrane. In terms of biological role, involved in ESCRT-dependent multivesicular body (MVB) formation and sorting of endosomal cargo proteins into MVBs. The polypeptide is ESCRT-related protein CHMP1 (Oryza sativa subsp. japonica (Rice)).